The primary structure comprises 7756 residues: Linear gramicidin synthase subunit C (7756 aa).

Carrier domains follow at residues 977-1052 (EPRN…AALQ), 2042-2116 (APAT…ADSS), 3557-3632 (APRT…ASLL), 4621-4695 (APAT…TVTD), 6141-6216 (APRK…AGLL), and 7200-7274 (APET…GDSV). An O-(pantetheine 4'-phosphoryl)serine mark is found at S1012, S2077, S3592, S4656, S6176, and S7235.

This sequence belongs to the ATP-dependent AMP-binding enzyme family. In terms of assembly, large multienzyme complex composed of 4 subunits; LgrA, LgrB, LgrC and LgrD. It depends on pantetheine 4'-phosphate as a cofactor.

Activates the 7th to 12th amino acids (Val, D-Val, Trp, D-Leu, Xaa and D-Leu) in linear gramicidin and catalyzes the formation of the peptide bond between them. This enzyme is also responsible for the epimerization of the 8th (D-Val), the 10th (D-Leu) and 12th (D-Leu) amino acids. The 11th (Xaa) amino acid is Trp in linear gramicidin A; Phe in linear gramicidin B and Tyr in linear gramicidin C. In Brevibacillus parabrevis, this protein is Linear gramicidin synthase subunit C (lgrC).